Consider the following 223-residue polypeptide: Ribose-5-phosphate isomerase A (223 aa).

Substrate is bound by residues 28 to 31, 81 to 84, and 94 to 97; these read TGTT, DSAD, and KGGG. The Proton acceptor role is filled by Glu-103. Lys-121 is a binding site for substrate.

The protein belongs to the ribose 5-phosphate isomerase family. As to quaternary structure, homodimer.

It carries out the reaction aldehydo-D-ribose 5-phosphate = D-ribulose 5-phosphate. It functions in the pathway carbohydrate degradation; pentose phosphate pathway; D-ribose 5-phosphate from D-ribulose 5-phosphate (non-oxidative stage): step 1/1. In terms of biological role, catalyzes the reversible conversion of ribose-5-phosphate to ribulose 5-phosphate. This chain is Ribose-5-phosphate isomerase A, found in Buchnera aphidicola subsp. Acyrthosiphon pisum (strain 5A).